We begin with the raw amino-acid sequence, 402 residues long: Tyrosine--tRNA ligase (402 aa).

Residues 47 to 56 carry the 'HIGH' region motif; it reads PTAPDLHLGH. Residues 232–236 carry the 'KMSKS' region motif; that stretch reads KMSKS. Residue Lys235 participates in ATP binding. Positions 341 to 401 constitute an S4 RNA-binding domain; sequence VGVLDVLKQI…GKKRFMKLNI (61 aa).

Belongs to the class-I aminoacyl-tRNA synthetase family. TyrS type 2 subfamily. Homodimer.

The protein resides in the cytoplasm. It carries out the reaction tRNA(Tyr) + L-tyrosine + ATP = L-tyrosyl-tRNA(Tyr) + AMP + diphosphate + H(+). Its function is as follows. Catalyzes the attachment of tyrosine to tRNA(Tyr) in a two-step reaction: tyrosine is first activated by ATP to form Tyr-AMP and then transferred to the acceptor end of tRNA(Tyr). In Helicobacter pylori (strain J99 / ATCC 700824) (Campylobacter pylori J99), this protein is Tyrosine--tRNA ligase.